A 510-amino-acid polypeptide reads, in one-letter code: MRSSQTLSKYIDKATDQFNLEPNLALNIEIADLINEKKGNTPREAALLILKRVNSANPTVSYLALHLLDICVKNCGYPFHFQIASEEFLNGFVSRFPNHPISRMNKIQSKMLEMLEEWNYMLCKNNRHREDFSRIHDIRELMAFRGYKFPAVDEDSIAVMKPNNSLRSAQELAREDLEAHKAKLQELLRRGTPMDLAEANALMKVIAGYDEENTEDYSALAAADLESIRSKALRVKQFLVNQTVSLEEGTLADAVESLKVYQTKIARILREENEDEYYVQKLLSLNDLLINVIEECSNSDLIHSGTNVVSSQPNVVESHVPPSSNDTKQESSLIDLMKLTEEPAVPSPSLPTNVPANQSLSMLSSLSNSMSSTSNGALNSPSYSQAAIPNTNSSLTSILQSDSLMISTQLTSVQKSSGFASYSVQFSNCSLTWPVSEVVFQVAVVKSLKLQLLPHTGDAIIAPGKQNAAHEIMNITNIPADASDLRIRWRVQWIIGTDHRVEQGESHLPL.

The 137-residue stretch at 14-150 folds into the VHS domain; it reads ATDQFNLEPN…LMAFRGYKFP (137 aa). Positions 177-301 constitute a GAT domain; sequence LEAHKAKLQE…VIEECSNSDL (125 aa). Positions 391 to 510 constitute a GAE domain; it reads TNSSLTSILQ…VEQGESHLPL (120 aa).

It is found in the golgi apparatus. Its subcellular location is the trans-Golgi network. May play a role in the regulation of membrane traffic through the trans-Golgi network. This Schizosaccharomyces pombe (strain 972 / ATCC 24843) (Fission yeast) protein is Probable ADP-ribosylation factor-binding protein C1F3.05.